The sequence spans 356 residues: Peptide chain release factor 1 (356 aa).

Q232 carries the post-translational modification N5-methylglutamine.

It belongs to the prokaryotic/mitochondrial release factor family. In terms of processing, methylated by PrmC. Methylation increases the termination efficiency of RF1.

Its subcellular location is the cytoplasm. In terms of biological role, peptide chain release factor 1 directs the termination of translation in response to the peptide chain termination codons UAG and UAA. The polypeptide is Peptide chain release factor 1 (Thermoanaerobacter pseudethanolicus (strain ATCC 33223 / 39E) (Clostridium thermohydrosulfuricum)).